We begin with the raw amino-acid sequence, 668 residues long: Bifunctional polymyxin resistance protein ArnA (668 aa).

Positions 1 to 307 (MSAKTVVFAY…ELGLVDGSLL (307 aa)) are formyltransferase ArnAFT. Catalysis depends on His106, which acts as the Proton donor; for formyltransferase activity. (6R)-10-formyltetrahydrofolate-binding positions include Arg116 and 138–142 (VKRAD). The interval 317–668 (RRTRVLILGV…IERPSNKEAC (352 aa)) is dehydrogenase ArnADH. NAD(+) is bound by residues Asp350 and 371-372 (DI). Residues Ala396, Tyr401, and 435 to 436 (TS) each bind UDP-alpha-D-glucuronate. Glu437 functions as the Proton acceptor; for decarboxylase activity in the catalytic mechanism. UDP-alpha-D-glucuronate is bound by residues Arg463, Asn494, 528–537 (RLFDGGEQKR), and Tyr615. Arg621 acts as the Proton donor; for decarboxylase activity in catalysis.

In the N-terminal section; belongs to the Fmt family. UDP-L-Ara4N formyltransferase subfamily. It in the C-terminal section; belongs to the NAD(P)-dependent epimerase/dehydratase family. UDP-glucuronic acid decarboxylase subfamily. Homohexamer, formed by a dimer of trimers.

The enzyme catalyses UDP-alpha-D-glucuronate + NAD(+) = UDP-beta-L-threo-pentopyranos-4-ulose + CO2 + NADH. It catalyses the reaction UDP-4-amino-4-deoxy-beta-L-arabinose + (6R)-10-formyltetrahydrofolate = UDP-4-deoxy-4-formamido-beta-L-arabinose + (6S)-5,6,7,8-tetrahydrofolate + H(+). It functions in the pathway nucleotide-sugar biosynthesis; UDP-4-deoxy-4-formamido-beta-L-arabinose biosynthesis; UDP-4-deoxy-4-formamido-beta-L-arabinose from UDP-alpha-D-glucuronate: step 1/3. It participates in nucleotide-sugar biosynthesis; UDP-4-deoxy-4-formamido-beta-L-arabinose biosynthesis; UDP-4-deoxy-4-formamido-beta-L-arabinose from UDP-alpha-D-glucuronate: step 3/3. Its pathway is bacterial outer membrane biogenesis; lipopolysaccharide biosynthesis. Bifunctional enzyme that catalyzes the oxidative decarboxylation of UDP-glucuronic acid (UDP-GlcUA) to UDP-4-keto-arabinose (UDP-Ara4O) and the addition of a formyl group to UDP-4-amino-4-deoxy-L-arabinose (UDP-L-Ara4N) to form UDP-L-4-formamido-arabinose (UDP-L-Ara4FN). The modified arabinose is attached to lipid A and is required for resistance to polymyxin and cationic antimicrobial peptides. The protein is Bifunctional polymyxin resistance protein ArnA of Pseudomonas fluorescens (strain Pf0-1).